The following is a 275-amino-acid chain: 2-dehydro-3-deoxyphosphooctonate aldolase (275 aa).

The protein belongs to the KdsA family.

The protein localises to the cytoplasm. It carries out the reaction D-arabinose 5-phosphate + phosphoenolpyruvate + H2O = 3-deoxy-alpha-D-manno-2-octulosonate-8-phosphate + phosphate. The protein operates within carbohydrate biosynthesis; 3-deoxy-D-manno-octulosonate biosynthesis; 3-deoxy-D-manno-octulosonate from D-ribulose 5-phosphate: step 2/3. It participates in bacterial outer membrane biogenesis; lipopolysaccharide biosynthesis. This Francisella tularensis subsp. mediasiatica (strain FSC147) protein is 2-dehydro-3-deoxyphosphooctonate aldolase.